A 375-amino-acid polypeptide reads, in one-letter code: Queuine tRNA-ribosyltransferase (375 aa).

The active-site Proton acceptor is the Asp94. Substrate contacts are provided by residues 94–98 (DSGGF), Asp148, Gln191, and Gly218. The segment at 249–255 (GVGTPED) is RNA binding. Residue Asp268 is the Nucleophile of the active site. Residues 273–277 (TRIAR) form an RNA binding; important for wobble base 34 recognition region. The Zn(2+) site is built by Cys306, Cys308, Cys311, and His337.

Belongs to the queuine tRNA-ribosyltransferase family. Homodimer. Within each dimer, one monomer is responsible for RNA recognition and catalysis, while the other monomer binds to the replacement base PreQ1. Zn(2+) is required as a cofactor.

The catalysed reaction is 7-aminomethyl-7-carbaguanine + guanosine(34) in tRNA = 7-aminomethyl-7-carbaguanosine(34) in tRNA + guanine. The protein operates within tRNA modification; tRNA-queuosine biosynthesis. Its function is as follows. Catalyzes the base-exchange of a guanine (G) residue with the queuine precursor 7-aminomethyl-7-deazaguanine (PreQ1) at position 34 (anticodon wobble position) in tRNAs with GU(N) anticodons (tRNA-Asp, -Asn, -His and -Tyr). Catalysis occurs through a double-displacement mechanism. The nucleophile active site attacks the C1' of nucleotide 34 to detach the guanine base from the RNA, forming a covalent enzyme-RNA intermediate. The proton acceptor active site deprotonates the incoming PreQ1, allowing a nucleophilic attack on the C1' of the ribose to form the product. After dissociation, two additional enzymatic reactions on the tRNA convert PreQ1 to queuine (Q), resulting in the hypermodified nucleoside queuosine (7-(((4,5-cis-dihydroxy-2-cyclopenten-1-yl)amino)methyl)-7-deazaguanosine). The sequence is that of Queuine tRNA-ribosyltransferase from Caldanaerobacter subterraneus subsp. tengcongensis (strain DSM 15242 / JCM 11007 / NBRC 100824 / MB4) (Thermoanaerobacter tengcongensis).